Reading from the N-terminus, the 169-residue chain is Shikimate kinase (169 aa).

12–17 contacts ATP; the sequence is GCGKST. Serine 16 is a Mg(2+) binding site. Residues aspartate 34, arginine 57, and glycine 79 each contribute to the substrate site. Residue arginine 116 coordinates ATP. Residue arginine 133 participates in substrate binding.

This sequence belongs to the shikimate kinase family. In terms of assembly, monomer. Mg(2+) is required as a cofactor.

The protein localises to the cytoplasm. The catalysed reaction is shikimate + ATP = 3-phosphoshikimate + ADP + H(+). Its pathway is metabolic intermediate biosynthesis; chorismate biosynthesis; chorismate from D-erythrose 4-phosphate and phosphoenolpyruvate: step 5/7. Its function is as follows. Catalyzes the specific phosphorylation of the 3-hydroxyl group of shikimic acid using ATP as a cosubstrate. The protein is Shikimate kinase of Clostridium beijerinckii (strain ATCC 51743 / NCIMB 8052) (Clostridium acetobutylicum).